We begin with the raw amino-acid sequence, 453 residues long: Na(+)/H(+) antiporter NhaA 2 (453 aa).

Transmembrane regions (helical) follow at residues 23 to 43 (FLHI…AALI), 74 to 94 (LHFW…GMEI), 111 to 131 (LPMA…LSFG), 139 to 159 (GWAV…ALLG), 168 to 188 (VFLL…IAFF), 191 to 211 (GGLD…VIGL), 214 to 234 (IGVG…LGIL), 235 to 255 (LTGA…PVTA), 316 to 336 (VAFG…LSGV), 345 to 365 (WVMI…IVSV), 386 to 406 (IMLV…IANL), and 419 to 439 (LGVL…GVWS).

Belongs to the NhaA Na(+)/H(+) (TC 2.A.33) antiporter family.

The protein resides in the cell inner membrane. It catalyses the reaction Na(+)(in) + 2 H(+)(out) = Na(+)(out) + 2 H(+)(in). Na(+)/H(+) antiporter that extrudes sodium in exchange for external protons. This is Na(+)/H(+) antiporter NhaA 2 from Pseudomonas putida (strain ATCC 47054 / DSM 6125 / CFBP 8728 / NCIMB 11950 / KT2440).